A 92-amino-acid chain; its full sequence is Large ribosomal subunit protein eL31 (92 aa).

Belongs to the eukaryotic ribosomal protein eL31 family.

In Haloquadratum walsbyi (strain DSM 16790 / HBSQ001), this protein is Large ribosomal subunit protein eL31.